The sequence spans 132 residues: Small ribosomal subunit protein uS8 (132 aa).

The protein belongs to the universal ribosomal protein uS8 family. As to quaternary structure, part of the 30S ribosomal subunit. Contacts proteins S5 and S12.

Its function is as follows. One of the primary rRNA binding proteins, it binds directly to 16S rRNA central domain where it helps coordinate assembly of the platform of the 30S subunit. This Anaeromyxobacter dehalogenans (strain 2CP-1 / ATCC BAA-258) protein is Small ribosomal subunit protein uS8.